The sequence spans 323 residues: tRNA U34 carboxymethyltransferase (323 aa).

Carboxy-S-adenosyl-L-methionine-binding positions include Lys-91, Trp-105, Lys-110, Gly-130, 152-154 (DPT), 181-182 (IE), Met-196, Tyr-200, and Arg-315.

Belongs to the class I-like SAM-binding methyltransferase superfamily. CmoB family. Homotetramer.

It catalyses the reaction carboxy-S-adenosyl-L-methionine + 5-hydroxyuridine(34) in tRNA = 5-carboxymethoxyuridine(34) in tRNA + S-adenosyl-L-homocysteine + H(+). Catalyzes carboxymethyl transfer from carboxy-S-adenosyl-L-methionine (Cx-SAM) to 5-hydroxyuridine (ho5U) to form 5-carboxymethoxyuridine (cmo5U) at position 34 in tRNAs. This Shigella flexneri serotype 5b (strain 8401) protein is tRNA U34 carboxymethyltransferase.